The following is a 355-amino-acid chain: Histidinol-phosphate aminotransferase (355 aa).

Lysine 214 is subject to N6-(pyridoxal phosphate)lysine.

It belongs to the class-II pyridoxal-phosphate-dependent aminotransferase family. Histidinol-phosphate aminotransferase subfamily. As to quaternary structure, homodimer. It depends on pyridoxal 5'-phosphate as a cofactor.

The catalysed reaction is L-histidinol phosphate + 2-oxoglutarate = 3-(imidazol-4-yl)-2-oxopropyl phosphate + L-glutamate. The protein operates within amino-acid biosynthesis; L-histidine biosynthesis; L-histidine from 5-phospho-alpha-D-ribose 1-diphosphate: step 7/9. This Buchnera aphidicola subsp. Schizaphis graminum (strain Sg) protein is Histidinol-phosphate aminotransferase (hisC).